A 269-amino-acid chain; its full sequence is Probable cysteine protease avirulence protein AvrPpiC2 (269 aa).

The interval 1–39 (MTIVSGHIGKHPSLTTVQAGSSASVENQMPDPAQFSDGR) is disordered. The segment covering 13-27 (SLTTVQAGSSASVEN) has biased composition (polar residues). Catalysis depends on residues cysteine 72, histidine 213, and aspartate 230.

Belongs to the peptidase C58 family.

Functionally, potential cysteine protease. Avirulence protein, which may be essential during infection of plant cells from Pea and some Arabidopsis thaliana cultivars. May act by affecting the plant defense system. In plants lacking appropriate resistance (R) gene, it probably impairs the plant defense system and leads to the bacteria multiplication. In contrast, in plants containing the appropriate R protein, it is unable to induce disease symptoms, explaining its avirulence name. This Pseudomonas syringae pv. pisi protein is Probable cysteine protease avirulence protein AvrPpiC2 (avrPpiC2).